The sequence spans 100 residues: Large ribosomal subunit protein uL23 (100 aa).

The protein belongs to the universal ribosomal protein uL23 family. In terms of assembly, part of the 50S ribosomal subunit. Contacts protein L29, and trigger factor when it is bound to the ribosome.

Functionally, one of the early assembly proteins it binds 23S rRNA. One of the proteins that surrounds the polypeptide exit tunnel on the outside of the ribosome. Forms the main docking site for trigger factor binding to the ribosome. The chain is Large ribosomal subunit protein uL23 from Mycobacterium marinum (strain ATCC BAA-535 / M).